Here is a 601-residue protein sequence, read N- to C-terminus: Kelch-like ECH-associated protein 1A (601 aa).

The region spanning methionine 44–tyrosine 117 is the BTB domain. The region spanning lysine 153–proline 253 is the BACK domain. Kelch repeat units follow at residues proline 292–glycine 337, leucine 338–arginine 388, valine 389–glycine 435, alanine 436–glycine 482, glycine 484–alanine 529, and histidine 530–glycine 576.

It belongs to the KEAP1 family. Homodimer and heterodimer; heterodimerizes with keap1b. Component of the BCR(KEAP1) E3 ubiquitin ligase complex, at least composed of 2 molecules of cul3, 2 molecules of keap1 (keap1a and/or keap1b), and rbx1. Interacts with nfe2l2/nrf2; the interaction is direct. Post-translationally, non-enzymatic covalent modifications of reactive cysteines by electrophile metabolites inactivate the BCR(KEAP1) complex. As to expression, widely expressed.

The protein localises to the cytoplasm. It localises to the nucleus. It participates in protein modification; protein ubiquitination. Ubiquitin ligase activity of the BCR(KEAP1) complex is inhibited by oxidative stress and electrophile metabolites such as sulforaphane. Electrophile metabolites react with reactive cysteine residues in keap1 and trigger non-enzymatic covalent modifications of these cysteine residues, leading to inactivate the ubiquitin ligase activity of the BCR(KEAP1) complex. Its function is as follows. Substrate-specific adapter of a BCR (BTB-CUL3-RBX1) E3 ubiquitin ligase complex that regulates the response to oxidative stress by targeting nfe2l2/nrf2 for ubiquitination. Keap1 acts as a key sensor of oxidative and electrophilic stress: in normal conditions, the BCR(KEAP1) complex mediates ubiquitination and degradation of nfe2l2/nrf2, a transcription factor regulating expression of many cytoprotective genes. In response to oxidative stress, different electrophile metabolites trigger non-enzymatic covalent modifications of highly reactive cysteine residues in KEAP1, leading to inactivate the ubiquitin ligase activity of the BCR(KEAP1) complex, promoting nfe2l2/nrf2 nuclear accumulation and expression of phase II detoxifying enzymes. The polypeptide is Kelch-like ECH-associated protein 1A (Danio rerio (Zebrafish)).